Reading from the N-terminus, the 490-residue chain is Dipeptide and tripeptide permease A (490 aa).

At 1-34 the chain is on the cytoplasmic side; the sequence is MSNANNNQPENVSLNAFKQPRAFYLIFSIELWER. A helical transmembrane segment spans residues 35 to 55; that stretch reads FGYYGLQGIMAVYLVKMLGMT. The Periplasmic portion of the chain corresponds to 56 to 59; the sequence is EADS. A helical transmembrane segment spans residues 60–80; that stretch reads ITLFSSFSALVYGFVAIGGWL. Topologically, residues 81–89 are cytoplasmic; the sequence is GDKVLGAKR. A helical membrane pass occupies residues 90–110; it reads VIMLGALVLAIGYAFVAYSGH. A topological domain (periplasmic) is located at residue aspartate 111. Residues 112 to 132 traverse the membrane as a helical segment; that stretch reads LSLVYVGMATIAVGNGLFKAN. Residues 133-153 lie on the Cytoplasmic side of the membrane; sequence PSSLLSTCYEKNDPRLDGAFT. Residues 154–174 traverse the membrane as a helical segment; it reads MYYMSVNIGSFFSMLATPWLA. At 175–176 the chain is on the periplasmic side; the sequence is AR. The chain crosses the membrane as a helical span at residues 177–197; the sequence is FGWSVAFSLSVVGMLITLVNF. Topologically, residues 198–217 are cytoplasmic; that stretch reads MMCRRWVKDQGSKPDFAPLQ. A helical membrane pass occupies residues 218 to 238; the sequence is VGKLMMTLVGVVILVAISTWL. The Periplasmic portion of the chain corresponds to 239–246; sequence LHNQTIAR. The chain crosses the membrane as a helical span at residues 247–267; it reads WALAIISAGIILIFAKETFAL. The Cytoplasmic portion of the chain corresponds to 268–274; the sequence is QGGARRK. The helical transmembrane segment at 275 to 295 threads the bilayer; it reads MIVAFLLMLEAVVFFVLYSQM. Residues 296-320 lie on the Periplasmic side of the membrane; sequence PTSLNFFAIHNVEHSIFGIAFEPEQ. Residues 321–341 traverse the membrane as a helical segment; the sequence is YQALNPFWIMVASPILAAIYN. Topologically, residues 342–352 are cytoplasmic; it reads KMGDRLPMPHK. Residues 353–373 traverse the membrane as a helical segment; that stretch reads FAIGMVLCSGAFLVLPWGASF. The Periplasmic segment spans residues 374–383; it reads ANEAGIVSVN. Residues 384–404 traverse the membrane as a helical segment; it reads WLILSYALQSIGELMISGLGL. The Cytoplasmic portion of the chain corresponds to 405–414; it reads AMVAQLVPQR. Residues 415–435 traverse the membrane as a helical segment; that stretch reads LMGFIMGSWFLTTAAAALIAG. Residues 436 to 460 are Periplasmic-facing; the sequence is KVAALTAVPGGEVADPHASLAIYSH. A helical membrane pass occupies residues 461-481; sequence VFMQIGLATAVIAVLMLLTAP. Over 482-490 the chain is Cytoplasmic; sequence KLNRMTLGD.

It belongs to the major facilitator superfamily. Proton-dependent oligopeptide transporter (POT/PTR) (TC 2.A.17) family. DtpA subfamily.

The protein localises to the cell inner membrane. Its function is as follows. Proton-dependent permease that transports di- and tripeptides. The protein is Dipeptide and tripeptide permease A of Edwardsiella piscicida.